The sequence spans 108 residues: Thiosulfate sulfurtransferase GlpE (108 aa).

One can recognise a Rhodanese domain in the interval 17–105; the sequence is HQGAAVLVDI…WHRRFPADVA (89 aa). The Cysteine persulfide intermediate role is filled by C65.

Belongs to the GlpE family.

It localises to the cytoplasm. It carries out the reaction thiosulfate + hydrogen cyanide = thiocyanate + sulfite + 2 H(+). The enzyme catalyses thiosulfate + [thioredoxin]-dithiol = [thioredoxin]-disulfide + hydrogen sulfide + sulfite + 2 H(+). Functionally, transferase that catalyzes the transfer of sulfur from thiosulfate to thiophilic acceptors such as cyanide or dithiols. May function in a CysM-independent thiosulfate assimilation pathway by catalyzing the conversion of thiosulfate to sulfite, which can then be used for L-cysteine biosynthesis. The polypeptide is Thiosulfate sulfurtransferase GlpE (Salmonella choleraesuis (strain SC-B67)).